Here is an 878-residue protein sequence, read N- to C-terminus: Probable di- and tripeptidase DUG2 (878 aa).

WD repeat units follow at residues asparagine 18–threonine 57, histidine 68–aspartate 107, arginine 235–threonine 274, aspartate 282–threonine 322, and proline 362–proline 405. Position 520 (histidine 520) interacts with Zn(2+). Aspartate 522 is an active-site residue. Aspartate 553 contacts Zn(2+). The active-site Proton acceptor is the glutamate 586. A Zn(2+)-binding site is contributed by glutamate 587. A WD 6 repeat occupies isoleucine 608 to leucine 651. Histidine 853 provides a ligand contact to Zn(2+).

Belongs to the peptidase M20A family. Component of the GSH degradosomal complex composed of at least DUG1, DUG2 and DUG3. Requires Zn(2+) as cofactor.

It is found in the cytoplasm. Its subcellular location is the nucleus. Component of the GSH degradosomal complex involved in the degradation of glutathione (GSH) and other peptides containing a gamma-glu-X bond. This Saccharomyces cerevisiae (strain ATCC 204508 / S288c) (Baker's yeast) protein is Probable di- and tripeptidase DUG2 (DUG2).